The sequence spans 389 residues: Succinate--CoA ligase [ADP-forming] subunit beta (389 aa).

The 236-residue stretch at 9-244 (KEIFRSMGVA…LDEEDPKEIE (236 aa)) folds into the ATP-grasp domain. ATP is bound by residues lysine 46, 53-55 (GRG), glutamate 99, cysteine 102, and glutamate 107. Residues asparagine 199 and aspartate 213 each contribute to the Mg(2+) site. Substrate-binding positions include asparagine 264 and 321–323 (GIM).

It belongs to the succinate/malate CoA ligase beta subunit family. In terms of assembly, heterotetramer of two alpha and two beta subunits. Requires Mg(2+) as cofactor.

It carries out the reaction succinate + ATP + CoA = succinyl-CoA + ADP + phosphate. The catalysed reaction is GTP + succinate + CoA = succinyl-CoA + GDP + phosphate. The protein operates within carbohydrate metabolism; tricarboxylic acid cycle; succinate from succinyl-CoA (ligase route): step 1/1. Functionally, succinyl-CoA synthetase functions in the citric acid cycle (TCA), coupling the hydrolysis of succinyl-CoA to the synthesis of either ATP or GTP and thus represents the only step of substrate-level phosphorylation in the TCA. The beta subunit provides nucleotide specificity of the enzyme and binds the substrate succinate, while the binding sites for coenzyme A and phosphate are found in the alpha subunit. The polypeptide is Succinate--CoA ligase [ADP-forming] subunit beta (Macrococcus caseolyticus (strain JCSC5402) (Macrococcoides caseolyticum)).